Consider the following 451-residue polypeptide: UDP-glycosyltransferase 13 (451 aa).

Residue His15 is the Proton acceptor of the active site. His15 contacts an anthocyanidin. Catalysis depends on Asp93, which acts as the Charge relay. UDP-alpha-D-glucose is bound by residues Ala326, Gln328, His343, Trp346, Asn347, Ser348, and Glu351. Ala366 lines the an anthocyanidin pocket. UDP-alpha-D-glucose-binding residues include Glu367 and Gln368.

It belongs to the UDP-glycosyltransferase family. Expressed in roots. Detected in stems and leaves.

The catalysed reaction is a 7-hydroxyisoflavone + UDP-alpha-D-glucose = a 7-hydroxyisoflavone 7-O-beta-D-glucoside + UDP + H(+). Isoflavone 7-O-glucosyltransferase converting daidzein to daidzin, genistein to genistin and formononetin to ononin. Shows some activity toward the flavanones liquiritigenin and naringenin, but not toward cyanidin, isoliquiritigenin, apigenin, luteolin, kaempferol, quercetin, daidzin and puerarin. The polypeptide is UDP-glycosyltransferase 13 (Pueraria montana var. lobata (Kudzu vine)).